A 96-amino-acid polypeptide reads, in one-letter code: Transcription and mRNA export factor SUS1 (96 aa).

It belongs to the ENY2 family. As to quaternary structure, component of the nuclear pore complex (NPC)-associated TREX-2 complex (transcription and export complex 2), composed of at least SUS1, SAC3, THP1, SEM1, and CDC31. TREX-2 contains 2 SUS1 chains. The TREX-2 complex interacts with the nucleoporin NUP1. Component of the 1.8 MDa SAGA transcription coactivator-HAT complex. SAGA is built of 5 distinct domains with specialized functions. Within the SAGA complex, SUS1, SGF11, SGF73 and UBP8 form an additional subcomplex of SAGA called the DUB module (deubiquitination module). Interacts directly with THP1, SAC3, SGF11, and with the RNA polymerase II.

It localises to the nucleus. The protein localises to the nucleoplasm. The protein resides in the cytoplasm. It is found in the P-body. Functionally, involved in mRNA export coupled transcription activation by association with both the TREX-2 and the SAGA complexes. At the promoters, SAGA is required for recruitment of the basal transcription machinery. It influences RNA polymerase II transcriptional activity through different activities such as TBP interaction and promoter selectivity, interaction with transcription activators, and chromatin modification through histone acetylation and deubiquitination. Within the SAGA complex, participates in a subcomplex required for deubiquitination of H2B and for the maintenance of steady-state H3 methylation levels. The TREX-2 complex functions in docking export-competent ribonucleoprotein particles (mRNPs) to the nuclear entrance of the nuclear pore complex (nuclear basket). TREX-2 participates in mRNA export and accurate chromatin positioning in the nucleus by tethering genes to the nuclear periphery. May also be involved in cytoplasmic mRNA decay by interaction with components of P-bodies. This is Transcription and mRNA export factor SUS1 from Kluyveromyces lactis (strain ATCC 8585 / CBS 2359 / DSM 70799 / NBRC 1267 / NRRL Y-1140 / WM37) (Yeast).